We begin with the raw amino-acid sequence, 751 residues long: Leucine-rich repeat-containing protein 56 homolog (751 aa).

Residues 1–149 are disordered; sequence MKKSTVLDAR…IDKSRDNGQL (149 aa). A compositionally biased stretch (pro residues) spans 13-22; sequence GPLPRRPQQP. 2 stretches are compositionally biased toward polar residues: residues 28-39 and 60-87; these read RNSSQVEKNNAR and HSQS…NLNS. LRR repeat units lie at residues 210–235, 236–256, 258–279, 280–304, and 307–328; these read MPQL…NYAN, LRRL…GACA, VLEE…TEVS, STLQ…TLPQ, and KMKH…VELS. Disordered stretches follow at residues 430-538, 645-698, and 717-751; these read SRSH…QRQQ, TCTH…EKDW, and EAAL…PVVF. Composition is skewed to polar residues over residues 456-471 and 662-671; these read KNSQ…TNQG and QQEQPTTAGA. The span at 717 to 738 shows a compositional bias: basic and acidic residues; the sequence is EAALKERVQGSKEVDGGGLEKV. Residues 739–751 are compositionally biased toward acidic residues; that stretch reads ESEDEEDVSPVVF.

It belongs to the LRRC56 family.

It is found in the cell projection. The protein resides in the cilium. It localises to the flagellum. Functionally, required for the assembly of dynein arms in the distal portion of flagellum axoneme. This chain is Leucine-rich repeat-containing protein 56 homolog, found in Trypanosoma brucei brucei (strain 927/4 GUTat10.1).